The sequence spans 507 residues: Glycogen synthase (507 aa).

Position 15 (Lys-15) interacts with ADP-alpha-D-glucose.

Belongs to the glycosyltransferase 1 family. Bacterial/plant glycogen synthase subfamily.

The catalysed reaction is [(1-&gt;4)-alpha-D-glucosyl](n) + ADP-alpha-D-glucose = [(1-&gt;4)-alpha-D-glucosyl](n+1) + ADP + H(+). It functions in the pathway glycan biosynthesis; glycogen biosynthesis. Synthesizes alpha-1,4-glucan chains using ADP-glucose. The chain is Glycogen synthase from Rhodopirellula baltica (strain DSM 10527 / NCIMB 13988 / SH1).